A 297-amino-acid chain; its full sequence is Protoheme IX farnesyltransferase (297 aa).

The next 9 helical transmembrane spans lie at 16-36 (VVALIVFTALVGMVLAIPGVP), 45-65 (VLGFLGIWLAASAAAAINQLL), 93-113 (VFASVLIVLSMVILVLWVNLI), 114-134 (TAVLTFASLIGYAVIYTVYLK), 141-161 (IVIGGLAGAMPPMLGWAAVTG), 172-192 (SLLVLIIFIWTPPHFWALAIF), 223-243 (VVLALVCLLPYLVGMSGAFYL), 244-264 (GGAIVLNAVFLWYAWRMLDPP), and 277-297 (IVYLMALFAFLLVDHWILPWL).

Belongs to the UbiA prenyltransferase family. Protoheme IX farnesyltransferase subfamily.

It localises to the cell inner membrane. It carries out the reaction heme b + (2E,6E)-farnesyl diphosphate + H2O = Fe(II)-heme o + diphosphate. It functions in the pathway porphyrin-containing compound metabolism; heme O biosynthesis; heme O from protoheme: step 1/1. In terms of biological role, converts heme B (protoheme IX) to heme O by substitution of the vinyl group on carbon 2 of heme B porphyrin ring with a hydroxyethyl farnesyl side group. The protein is Protoheme IX farnesyltransferase of Stenotrophomonas maltophilia (strain R551-3).